The following is a 546-amino-acid chain: NRAMP-like transporter smf-2 (546 aa).

Topologically, residues methionine 1 to lysine 42 are cytoplasmic. A helical membrane pass occupies residues leucine 43–isoleucine 63. The Extracellular portion of the chain corresponds to glutamate 64 to glycine 70. Residues alanine 71–leucine 91 form a helical membrane-spanning segment. Residues glutamine 92 to arginine 119 lie on the Cytoplasmic side of the membrane. The helical transmembrane segment at isoleucine 120–glycine 140 threads the bilayer. Over threonine 141–lysine 152 the chain is Extracellular. The helical transmembrane segment at isoleucine 153 to aspartate 173 threads the bilayer. At arginine 174 to glutamate 181 the chain is on the cytoplasmic side. A helical membrane pass occupies residues phenylalanine 182–methionine 202. Topologically, residues lysine 203–threonine 228 are extracellular. Residues alanine 229–valine 249 form a helical membrane-spanning segment. The Cytoplasmic segment spans residues lysine 250–serine 270. Residues isoleucine 271 to phenylalanine 291 traverse the membrane as a helical segment. The Extracellular segment spans residues alanine 292–glycine 334. N-linked (GlcNAc...) asparagine glycosylation is present at asparagine 321. A helical transmembrane segment spans residues isoleucine 335 to alanine 355. Residues alanine 356–valine 386 are Cytoplasmic-facing. The helical transmembrane segment at leucine 387–isoleucine 407 threads the bilayer. The Extracellular portion of the chain corresponds to lysine 408–aspartate 415. A glycan (N-linked (GlcNAc...) asparagine) is linked at asparagine 409. Residues phenylalanine 416–threonine 436 traverse the membrane as a helical segment. Residues serine 437–tyrosine 453 are Cytoplasmic-facing. A helical membrane pass occupies residues phenylalanine 454 to valine 474. Over threonine 475–leucine 483 the chain is Extracellular. The helical transmembrane segment at isoleucine 484 to isoleucine 504 threads the bilayer. Topologically, residues tyrosine 505–phenylalanine 546 are cytoplasmic.

It belongs to the NRAMP family. As to expression, expressed in dopaminergic neurons (at protein level). Primarily expressed in mc1, mc2 and mc3 epithelial cells of the pharynx and vpil-6 pharyngeal-intestinal valve cells displaying an anterior-posterior expression gradient. Expressed in gonad sheath cells.

It is found in the apical cell membrane. The protein resides in the cytoplasmic vesicle membrane. Functionally, probable divalent metal ion transporter which regulates Mn(2+) uptake. The polypeptide is NRAMP-like transporter smf-2 (Caenorhabditis elegans).